A 61-amino-acid polypeptide reads, in one-letter code: Chi-conotoxin MrIA (61 aa).

The first 19 residues, 1–19 (MRCLPVLIILLLLTASAPG), serve as a signal peptide directing secretion. Residues 20 to 48 (VVVLPKTEDDVPMSSVYGNGKSILRGILR) constitute a propeptide that is removed on maturation. Disulfide bonds link Cys52–Cys61 and Cys53–Cys58. Residue Pro60 is modified to 4-hydroxyproline.

This sequence belongs to the conotoxin T superfamily. In terms of tissue distribution, expressed by the venom duct.

Its subcellular location is the secreted. In terms of biological role, chi-conotoxins inhibit the neuronal noradrenaline transporter (NET/SLC6A2). Activity has been described on both human (inhibition of norepinephrine uptake is IC(50)=1.26 uM) and rat (pIC(50)=6.21 corresponding IC(50)=0.16 uM) transporters. Acts as a reversible non-competitive inhibitor. The polypeptide is Chi-conotoxin MrIA (Conus marmoreus (Marble cone)).